Consider the following 184-residue polypeptide: NADH-quinone oxidoreductase subunit B (184 aa).

Positions 63, 64, 128, and 158 each coordinate [4Fe-4S] cluster.

The protein belongs to the complex I 20 kDa subunit family. In terms of assembly, NDH-1 is composed of 14 different subunits. Subunits NuoB, C, D, E, F, and G constitute the peripheral sector of the complex. [4Fe-4S] cluster serves as cofactor.

The protein resides in the cell inner membrane. It catalyses the reaction a quinone + NADH + 5 H(+)(in) = a quinol + NAD(+) + 4 H(+)(out). NDH-1 shuttles electrons from NADH, via FMN and iron-sulfur (Fe-S) centers, to quinones in the respiratory chain. Couples the redox reaction to proton translocation (for every two electrons transferred, four hydrogen ions are translocated across the cytoplasmic membrane), and thus conserves the redox energy in a proton gradient. The protein is NADH-quinone oxidoreductase subunit B of Stenotrophomonas maltophilia (strain R551-3).